The following is a 560-amino-acid chain: Protein AATF (560 aa).

Ala-2 bears the N-acetylalanine mark. 2 positions are modified to phosphoserine: Ser-61 and Ser-63. Residues 76 to 208 (TSRKAWNEDH…GDRNSEDDGV (133 aa)) form a disordered region. Positions 94–129 (SDEEISDEEGSGDEDSEGLGLEEYDEDDLGAAEEQE) are enriched in acidic residues. 2 positions are modified to phosphoserine: Ser-150 and Ser-155. Positions 156 to 165 (DFEKFTKGMD) are enriched in basic and acidic residues. A compositionally biased stretch (acidic residues) spans 168-195 (GSSEEEEDEESGMEEGDDAEDSQGESEE). Ser-203, Ser-273, Ser-316, Ser-320, and Ser-321 each carry phosphoserine. A POLR2J binding region spans residues 273–315 (SALKNSHKALKALLRSLVGLQEELLFQYPDTRYLVDGTKPNAG). Positions 309–333 (GTKPNAGSEEISSEDDELVEEKKQQ) are disordered. An RB1 binding region spans residues 316–372 (SEEISSEDDELVEEKKQQRRRVPAKRKLEMEDYPSFMAKRFADFTVYRNRTLQKWHD). Residues 373-472 (KTKLASGKLG…FYHQLLRELI (100 aa)) are RB1 and SP1 binding.

Belongs to the AATF family. In terms of assembly, part of the small subunit (SSU) processome, composed of more than 70 proteins and the RNA chaperone small nucleolar RNA (snoRNA) U3. Interacts with POLR2J, RB1/RB, RBL1/P107 and RBL2/P130. Interacts with PAWR and SP1. May also bind MAPT. Post-translationally, hyperphosphorylated during the G1/S phase transition. As to expression, ubiquitously expressed. Expressed at high levels in brain, heart, kidney, placenta and thymus.

It localises to the nucleus. It is found in the nucleolus. Part of the small subunit (SSU) processome, first precursor of the small eukaryotic ribosomal subunit. During the assembly of the SSU processome in the nucleolus, many ribosome biogenesis factors, an RNA chaperone and ribosomal proteins associate with the nascent pre-rRNA and work in concert to generate RNA folding, modifications, rearrangements and cleavage as well as targeted degradation of pre-ribosomal RNA by the RNA exosome. May function as a general inhibitor of the histone deacetylase HDAC1. Binding to the pocket region of RB1 may displace HDAC1 from RB1/E2F complexes, leading to activation of E2F target genes and cell cycle progression. Conversely, displacement of HDAC1 from SP1 bound to the CDKN1A promoter leads to increased expression of this CDK inhibitor and blocks cell cycle progression. Also antagonizes PAWR mediated induction of aberrant amyloid peptide production in Alzheimer disease (presenile and senile dementia), although the molecular basis for this phenomenon has not been described to date. The sequence is that of Protein AATF from Homo sapiens (Human).